Reading from the N-terminus, the 215-residue chain is TLD domain-containing protein 2 (215 aa).

The segment at 1–46 is disordered; that stretch reads MRGLRWRYTRLPSQVEDTLSGEEGNEEEEEEEAAPDPAAAPEDPTV. Acidic residues predominate over residues 19 to 34; sequence LSGEEGNEEEEEEEAA. Residues 54–215 form the TLDc domain; the sequence is QVLSASEIRQ…IQELEAWLLS (162 aa).

Belongs to the OXR1 family.

The sequence is that of TLD domain-containing protein 2 (TLDC2) from Homo sapiens (Human).